Here is a 101-residue protein sequence, read N- to C-terminus: NADH-quinone oxidoreductase subunit K (101 aa).

3 helical membrane-spanning segments follow: residues 4–24, 29–49, and 65–85; these read LSHYLTVAAILFTLGVLGIFI, IIVILMSVELILLAVNINLVA, and FVLTVAAAEAAIGLAILVVFF.

It belongs to the complex I subunit 4L family. In terms of assembly, NDH-1 is composed of 14 different subunits. Subunits NuoA, H, J, K, L, M, N constitute the membrane sector of the complex.

The protein localises to the cell inner membrane. It carries out the reaction a quinone + NADH + 5 H(+)(in) = a quinol + NAD(+) + 4 H(+)(out). In terms of biological role, NDH-1 shuttles electrons from NADH, via FMN and iron-sulfur (Fe-S) centers, to quinones in the respiratory chain. The immediate electron acceptor for the enzyme in this species is believed to be ubiquinone. Couples the redox reaction to proton translocation (for every two electrons transferred, four hydrogen ions are translocated across the cytoplasmic membrane), and thus conserves the redox energy in a proton gradient. The chain is NADH-quinone oxidoreductase subunit K from Methylobacterium nodulans (strain LMG 21967 / CNCM I-2342 / ORS 2060).